Reading from the N-terminus, the 331-residue chain is MCEKIAAGILGTGSYLPEKILTNFDLEKMVDTSDEWITTRTGIKERRIADPSQATSDLATEASKRALEDANLKPEDLDMIIVATVTPDMNFPSTACIVQANLGALNAAAFDISVGCSGFIYGLAIAQQFVETGMYRNVLVIGAETLSKIINWKDRNTCVLFGDGAGAAVVGRVESGYGILGSYLGADGTGGKYLYMPAGGSRMPASHETVEKNLHTIFMEGQEVFKFAVKVMDSATIEVLERCGLTPEDIDMLIPHQANTRIIEAARKRLKLTNDKVYINLDKYGNTSAASVAIALDEAYRKGLIKKGDIILTVAFGAGLTWASSVIKWSK.

Catalysis depends on residues Cys-116 and His-256. The ACP-binding stretch occupies residues 257–261 (QANTR). The active site involves Asn-286.

The protein belongs to the thiolase-like superfamily. FabH family. Homodimer.

It localises to the cytoplasm. It carries out the reaction malonyl-[ACP] + acetyl-CoA + H(+) = 3-oxobutanoyl-[ACP] + CO2 + CoA. It participates in lipid metabolism; fatty acid biosynthesis. Functionally, catalyzes the condensation reaction of fatty acid synthesis by the addition to an acyl acceptor of two carbons from malonyl-ACP. Catalyzes the first condensation reaction which initiates fatty acid synthesis and may therefore play a role in governing the total rate of fatty acid production. Possesses both acetoacetyl-ACP synthase and acetyl transacylase activities. Its substrate specificity determines the biosynthesis of branched-chain and/or straight-chain of fatty acids. This Caldanaerobacter subterraneus subsp. tengcongensis (strain DSM 15242 / JCM 11007 / NBRC 100824 / MB4) (Thermoanaerobacter tengcongensis) protein is Beta-ketoacyl-[acyl-carrier-protein] synthase III.